A 303-amino-acid polypeptide reads, in one-letter code: Archaeosortase A (303 aa).

7 helical membrane-spanning segments follow: residues 3 to 23 (GLLS…GAVA), 36 to 56 (TAAW…FTLV), 60 to 80 (YIEG…GWLL), 93 to 113 (AVAA…FTLL), 169 to 189 (VVLA…IAAV), 200 to 220 (LAIA…FIAI), and 259 to 279 (LAVV…PELL). The active-site Acyl-thioester intermediate is the C173. R214 (proton donor) is an active-site residue.

The protein belongs to the exosortase/archaeosortase family. Archaeosortase A subfamily.

The protein localises to the cell membrane. Its function is as follows. Transpeptidase that recognizes and modifies its substrate by proteolytic cleavage of a sorting signal. Following cleavage, a covalent intermediate is formed via a thioester bond between the archaeosortase and its substrate, which is then transferred and covalently attached to the cell membrane. This sortase recognizes a tripartite structure consisting of a conserved Pro-Gly-Phe (PGF) motif, followed by a transmembrane alpha helix domain and a cluster of basic residues, usually at the C-terminus of target proteins. Confirmed substrates include the cell surface S-layer glycoprotein Csg and HVO_0405. ArtA is required for the C-terminal processing of Csg and for its lipidation and attachment to the archaeal plasma membrane. It is also required for the processing of HVO_0405, which contains an atypical central tripartite structure. In Haloferax volcanii (strain ATCC 29605 / DSM 3757 / JCM 8879 / NBRC 14742 / NCIMB 2012 / VKM B-1768 / DS2) (Halobacterium volcanii), this protein is Archaeosortase A.